Reading from the N-terminus, the 1240-residue chain is DNA polymerase catalytic subunit (1240 aa).

A compositionally biased stretch (low complexity) spans 1–26; it reads MFCAAGGPASPGGKSAARAASGFFAP. Disordered stretches follow at residues 1–65, 646–695, and 1103–1139; these read MFCA…PAQR, GLDK…RETG, and AAAPGDEPAPPAALPSPAKRPRETPSHADPPGGASKP. Over residues 44–56 the composition is skewed to polar residues; sequence NFYNPHLAQTGTQ. The segment covering 669–688 has biased composition (acidic residues); that stretch reads NGDEDKDDDEDGDEDGDERE.

This sequence belongs to the DNA polymerase type-B family. In terms of assembly, forms a complex with the ssDNA-binding protein UL29, the DNA polymerase processivity factor, and the alkaline exonuclease. Interacts with the putative helicase-primase complex subunit UL8; this interaction may coordinate leading and lagging strand DNA synthesis at the replication fork.

Its subcellular location is the host nucleus. The enzyme catalyses DNA(n) + a 2'-deoxyribonucleoside 5'-triphosphate = DNA(n+1) + diphosphate. The catalysed reaction is Endonucleolytic cleavage to 5'-phosphomonoester.. In terms of biological role, replicates viral genomic DNA. The replication complex is composed of six viral proteins: the DNA polymerase, processivity factor, primase, primase-associated factor, helicase, and ssDNA-binding protein. Additionally, the polymerase contains an intrinsic ribonuclease H (RNase H) activity that specifically degrades RNA/DNA heteroduplexes or duplex DNA substrates in the 5' to 3' direction. Therefore, it can catalyze the excision of the RNA primers that initiate the synthesis of Okazaki fragments at a replication fork during viral DNA replication. This is DNA polymerase catalytic subunit from Human herpesvirus 2 (strain 186) (HHV-2).